Here is a 258-residue protein sequence, read N- to C-terminus: Large ribosomal subunit protein uL15c (258 aa).

Residues 1-65 constitute a chloroplast transit peptide; it reads MSAASLIPVS…NVKSSGENVR (65 aa). The tract at residues 67-90 is disordered; that stretch reads RLDNLGPQPGSRKRPKRKGRGIAA. A compositionally biased stretch (basic residues) spans 77 to 86; it reads SRKRPKRKGR.

It belongs to the universal ribosomal protein uL15 family. Part of the 50S ribosomal subunit.

The protein resides in the plastid. Its subcellular location is the chloroplast. The protein is Large ribosomal subunit protein uL15c (RPL15) of Pisum sativum (Garden pea).